Consider the following 80-residue polypeptide: Mu-conotoxin BuIIIC (80 aa).

The N-terminal stretch at 1–22 is a signal peptide; the sequence is MMSKLGVLLTICLLLFPLFALP. Positions 23–51 are excised as a propeptide; it reads QDGDQPADRPAERMQDDLSSEQHPLFEKR. 3 disulfides stabilise this stretch: Cys56–Cys70, Cys57–Cys76, and Cys66–Cys77. Position 77 is a cysteine amide (Cys77).

This sequence belongs to the conotoxin M superfamily. Expressed by the venom duct.

The protein resides in the secreted. Mu-conotoxins block voltage-gated sodium channels. Extremely potent inhibitor of Nav1.4/SCN4A (96% inhibition at 1 uM). The inhibition is very slowly reversible. The protein is Mu-conotoxin BuIIIC of Conus bullatus (Bubble cone).